A 632-amino-acid polypeptide reads, in one-letter code: Pescadillo homolog (632 aa).

The tract at residues 306 to 341 is disordered; sequence GDDADVDMDEGAKETDEEEDEDFVERPSKAQEVDDV. A compositionally biased stretch (acidic residues) spans 307–328; it reads DDADVDMDEGAKETDEEEDEDF. The BRCT domain maps to 361 to 459; sequence RQNLLFSPYT…KIISSEGYGP (99 aa). Disordered regions lie at residues 485 to 535, 565 to 585, and 601 to 632; these read GEKA…QNPS, TKVHAKKVPASQKEKKGEEDL, and MQYSNREKAAEKEKLEKKRKAIEKRKAKEAKA. Acidic residues predominate over residues 492–516; sequence QEGEEEEEAAEQDEGESEDEEEDGK. Residues 521–531 are compositionally biased toward low complexity; that stretch reads AEYPPALLAAA. Composition is skewed to basic and acidic residues over residues 576–585 and 605–616; these read QKEKKGEEDL and NREKAAEKEKLE. Positions 595-632 form a coiled coil; the sequence is AKLYEKMQYSNREKAAEKEKLEKKRKAIEKRKAKEAKA.

Belongs to the pescadillo family. Component of the NOP7 complex, composed of ERB1, NOP7 and YTM1. The complex is held together by ERB1, which interacts with NOP7 via its N-terminal domain and with YTM1 via a high-affinity interaction between the seven-bladed beta-propeller domains of the 2 proteins. The NOP7 complex associates with the 66S pre-ribosome.

It localises to the nucleus. The protein localises to the nucleolus. The protein resides in the nucleoplasm. In terms of biological role, component of the NOP7 complex, which is required for maturation of the 25S and 5.8S ribosomal RNAs and formation of the 60S ribosome. This is Pescadillo homolog from Cryptococcus neoformans var. neoformans serotype D (strain B-3501A) (Filobasidiella neoformans).